The chain runs to 172 residues: MAKIQARTQNEGPEDGLREKMIAINRVTKVVKGGRILGFAALTVVGDGDGRVGMGKGKSKEVPAAVQKAMEEARRNLAKISIKNGTLHHRVTGHWGAASVVMIPAPKGTGIIAGGPMRAVFEVMGITDIVAKSHGSSNPYNMVRATLDGLKNSTTASEVAAKRGLTVEEIFA.

Residues 17–80 form the S5 DRBM domain; the sequence is LREKMIAINR…EEARRNLAKI (64 aa).

It belongs to the universal ribosomal protein uS5 family. Part of the 30S ribosomal subunit. Contacts proteins S4 and S8.

In terms of biological role, with S4 and S12 plays an important role in translational accuracy. Its function is as follows. Located at the back of the 30S subunit body where it stabilizes the conformation of the head with respect to the body. The protein is Small ribosomal subunit protein uS5 of Variovorax paradoxus (strain S110).